The following is a 190-amino-acid chain: Transcription termination/antitermination protein NusG (190 aa).

The KOW domain maps to 141 to 165 (GDMVRVTSGPFADFSGVVSEVNAPQ).

The protein belongs to the NusG family.

Participates in transcription elongation, termination and antitermination. The protein is Transcription termination/antitermination protein NusG of Deinococcus radiodurans (strain ATCC 13939 / DSM 20539 / JCM 16871 / CCUG 27074 / LMG 4051 / NBRC 15346 / NCIMB 9279 / VKM B-1422 / R1).